Here is a 780-residue protein sequence, read N- to C-terminus: E3 UFM1-protein ligase 1 homolog (780 aa).

Positions 403 to 413 (STSSTNPNHST) are enriched in polar residues. Disordered regions lie at residues 403–458 (STSS…RSHI) and 734–760 (SSDKQKPEMSEEPKDSDNSNDNQNIDL). Basic and acidic residues-rich tracts occupy residues 443–458 (KDRSTPDDLESTRSHI) and 736–750 (DKQKPEMSEEPKDSD).

The protein belongs to the UFL1 family.

E3 UFM1-protein ligase that mediates ufmylation of target proteins. The chain is E3 UFM1-protein ligase 1 homolog from Trichoplax adhaerens (Trichoplax reptans).